The chain runs to 285 residues: Ret finger protein-like 4A (285 aa).

An RING-type; degenerate zinc finger spans residues 11–53 (CYFCFRYLENPVYLNCGYICCFQCLDSLEKSPEGDGVLCPNCS). The 199-residue stretch at 78–276 (EPQLNFILTM…ISICPVMNPS (199 aa)) folds into the B30.2/SPRY domain.

As to quaternary structure, interacts with PSMB1, UBE2A and CCNB1.

Its subcellular location is the cytoplasm. It localises to the nucleus. The chain is Ret finger protein-like 4A (Rfpl4a) from Rattus norvegicus (Rat).